We begin with the raw amino-acid sequence, 143 residues long: Putative phosphotransferase IIA component SgcA (143 aa).

The PTS EIIA type-2 domain maps to 1–143; the sequence is MINDIKWVQA…DDALFALVSG (143 aa). The Tele-phosphohistidine intermediate role is filled by H63.

It localises to the cytoplasm. Its function is as follows. The phosphoenolpyruvate-dependent sugar phosphotransferase system (sugar PTS), a major carbohydrate active -transport system, catalyzes the phosphorylation of incoming sugar substrates concomitantly with their translocation across the cell membrane. This chain is Putative phosphotransferase IIA component SgcA (sgcA), found in Escherichia coli (strain K12).